We begin with the raw amino-acid sequence, 620 residues long: Translocator protein BipB (620 aa).

The interval 58–95 (QCDAQPAAHDARLDDRPALRAPQERDAPPLGASDTGSR) is disordered. Basic and acidic residues predominate over residues 66-84 (HDARLDDRPALRAPQERDA). Positions 309–339 (EMQAKREAELQKKSDEYQAQVKKAEEMQKTM) form a coiled coil. 3 helical membrane-spanning segments follow: residues 355 to 375 (FAAA…GLAL), 401 to 421 (AILK…LVAC), and 430 to 450 (LAGA…AAFV).

Belongs to the SctE/SipB/YopB family.

Its subcellular location is the secreted. It localises to the host membrane. Functionally, plays a role in the bacterium-induced formation of multinucleated giant cell (MNGC), which is formed after host cell fusion, as well as in the intercellular spreading of bacteria and in the induction of apoptosis in macrophages. May act in concert with other effector proteins to induce fusion of host cell membranes. This chain is Translocator protein BipB (bipB), found in Burkholderia mallei (strain NCTC 10247).